The following is a 397-amino-acid chain: MKETWRWFGESDPITLEHVRQTGASGVVTALHQIPDGTAWPAEEIAKRKAMIEAAGLEWSVCESIPMEQSIKRGDADAPKAIARWKDTLSRLGRAGVPVVCYNFMPVVDWTRTNLRWQARNTGLALRFEMADFVAYDVFILKRIRAAENYDPALVARAEERFAQMSEDEQSLLERNIIAGLPGGALVQTRQSIAALIASFDGIDSATMQGNLLAFLKEVVPVAEEVGVHLGIHPDDPPFSLFGLPRVVSTPADIRAILSAVESPNNGITLCTGSYGARSDNDLVAMAKEFASRVNFAHLRNVTVEADGSFFEDDHLDGGADMIGVIEALLREERSTAKAGRRTNIPMRPDHGHLLGDDITKKTNPGYSYIGRMKGLGELRGVIRTIERQLRREEAAA.

Belongs to the mannonate dehydratase family. The cofactor is Fe(2+). Mn(2+) is required as a cofactor.

It catalyses the reaction D-mannonate = 2-dehydro-3-deoxy-D-gluconate + H2O. It participates in carbohydrate metabolism; pentose and glucuronate interconversion. Catalyzes the dehydration of D-mannonate. This is Mannonate dehydratase 2 (uxuA2) from Agrobacterium fabrum (strain C58 / ATCC 33970) (Agrobacterium tumefaciens (strain C58)).